A 336-amino-acid polypeptide reads, in one-letter code: Cell division protein ZipA (336 aa).

Over 1-2 (ME) the chain is Periplasmic. A helical transmembrane segment spans residues 3–23 (LHILFFILAGLLIAVLIGFSL). Residues 24 to 336 (WSARREKSRI…SRQSYLARVS (313 aa)) are Cytoplasmic-facing. Residues 57–76 (SLNPQSYAQTTGQHGETEAD) are disordered. The segment covering 59-70 (NPQSYAQTTGQH) has biased composition (polar residues).

Belongs to the ZipA family. As to quaternary structure, interacts with FtsZ via their C-terminal domains.

It localises to the cell inner membrane. In terms of biological role, essential cell division protein that stabilizes the FtsZ protofilaments by cross-linking them and that serves as a cytoplasmic membrane anchor for the Z ring. Also required for the recruitment to the septal ring of downstream cell division proteins. The polypeptide is Cell division protein ZipA (Actinobacillus pleuropneumoniae serotype 7 (strain AP76)).